The following is a 285-amino-acid chain: MKVGYLGPAATFTHLAVSSCFQNGAEHVAYRTIPECIDAAVAGEVDFAFVPLENALEGSVNLTIDYLIHEQPLPIVGEMTLPIHQHLLVHPSRENAWKELDKIYSHSHAIAQCHKFLHRHFPSVPYEYANSTGAAAKFVSDHPELNIGVIANDMAASTYELKIVKRDIQDYRDNHTRFVILSPDENISFEVNSKLSSRPKTTLMVMLPQDDQSGALHRVLSAFSWRNLNLSKIESRPTKTGLGHYFFIIDIEKAFDDVLIPGAMQELEALGCKVRLLGAYQSYQL.

The 182-residue stretch at 2–183 folds into the Prephenate dehydratase domain; sequence KVGYLGPAAT…NHTRFVILSP (182 aa). One can recognise an ACT domain in the interval 204–281; sequence MVMLPQDDQS…CKVRLLGAYQ (78 aa).

It catalyses the reaction prephenate + H(+) = 3-phenylpyruvate + CO2 + H2O. Its pathway is amino-acid biosynthesis; L-phenylalanine biosynthesis; phenylpyruvate from prephenate: step 1/1. The sequence is that of Prephenate dehydratase (pheA) from Bacillus subtilis (strain 168).